The following is a 122-amino-acid chain: Holo-[acyl-carrier-protein] synthase (122 aa).

Mg(2+) is bound by residues Asp8 and Glu57.

The protein belongs to the P-Pant transferase superfamily. AcpS family. The cofactor is Mg(2+).

Its subcellular location is the cytoplasm. The enzyme catalyses apo-[ACP] + CoA = holo-[ACP] + adenosine 3',5'-bisphosphate + H(+). In terms of biological role, transfers the 4'-phosphopantetheine moiety from coenzyme A to a Ser of acyl-carrier-protein. This is Holo-[acyl-carrier-protein] synthase from Exiguobacterium sp. (strain ATCC BAA-1283 / AT1b).